A 186-amino-acid chain; its full sequence is dTTP/UTP pyrophosphatase (186 aa).

Residue Asp-66 is the Proton acceptor of the active site.

This sequence belongs to the Maf family. YhdE subfamily. Requires a divalent metal cation as cofactor.

The protein localises to the cytoplasm. It carries out the reaction dTTP + H2O = dTMP + diphosphate + H(+). The enzyme catalyses UTP + H2O = UMP + diphosphate + H(+). In terms of biological role, nucleoside triphosphate pyrophosphatase that hydrolyzes dTTP and UTP. May have a dual role in cell division arrest and in preventing the incorporation of modified nucleotides into cellular nucleic acids. In Pyrococcus horikoshii (strain ATCC 700860 / DSM 12428 / JCM 9974 / NBRC 100139 / OT-3), this protein is dTTP/UTP pyrophosphatase.